Reading from the N-terminus, the 496-residue chain is Probable cytosol aminopeptidase (496 aa).

Mn(2+) is bound by residues Lys266 and Asp271. Lys278 is a catalytic residue. Residues Asp289, Asp348, and Glu350 each coordinate Mn(2+). Arg352 is a catalytic residue.

Belongs to the peptidase M17 family. Mn(2+) is required as a cofactor.

It is found in the cytoplasm. It carries out the reaction Release of an N-terminal amino acid, Xaa-|-Yaa-, in which Xaa is preferably Leu, but may be other amino acids including Pro although not Arg or Lys, and Yaa may be Pro. Amino acid amides and methyl esters are also readily hydrolyzed, but rates on arylamides are exceedingly low.. The catalysed reaction is Release of an N-terminal amino acid, preferentially leucine, but not glutamic or aspartic acids.. Presumably involved in the processing and regular turnover of intracellular proteins. Catalyzes the removal of unsubstituted N-terminal amino acids from various peptides. This chain is Probable cytosol aminopeptidase, found in Pseudomonas syringae pv. syringae (strain B728a).